The primary structure comprises 444 residues: Spermidine/putrescine import ATP-binding protein PotA (444 aa).

One can recognise an ABC transporter domain in the interval 11–332 (ISLVDVDKEF…PVNKWVANFI (322 aa)). Residue 43–50 (GPSGSGKT) coordinates ATP. Positions 111–201 (RIKKKAEEIP…ESFKKKYLTR (91 aa)) are insert.

This sequence belongs to the ABC transporter superfamily. Spermidine/putrescine importer (TC 3.A.1.11.1) family. In terms of assembly, the complex is composed of two ATP-binding proteins (PotA), two transmembrane proteins (PotB and PotC) and a solute-binding protein (PotD).

Its subcellular location is the cell membrane. It carries out the reaction ATP + H2O + polyamine-[polyamine-binding protein]Side 1 = ADP + phosphate + polyamineSide 2 + [polyamine-binding protein]Side 1.. In terms of biological role, part of the ABC transporter complex PotABCD involved in spermidine/putrescine import. Responsible for energy coupling to the transport system. The polypeptide is Spermidine/putrescine import ATP-binding protein PotA (Mesomycoplasma hyopneumoniae (strain J / ATCC 25934 / NCTC 10110) (Mycoplasma hyopneumoniae)).